The sequence spans 435 residues: MTQTVNVIGAGLAGSEAAYQLAERGIKVNLIEMRPVKQTPAHHTDKFAELVCSNSLRGNALTNGVGVLKEEMRRLNSIIIEAADKARVPAGGALAVDRHDFSGYITETLKNHENITVINEEINAIPDGYTIIATGPLTTETLAQEIVDITGKDQLYFYDAAAPIIEKESIDMDKVYLKSRYDKGEAAYLNCPMTEDEFNRFYDAVLEAEVAPVNSFEKEKYFEGCMPFEVMAERGRKTLLFGPMKPVGLEDPKTGKRPYAVVQLRQDDAAGTLYNIVGFQTHLKWGAQKEVIKLIPGLENVDIVRYGVMHRNTFINSPDVLNEKYELISQPNIQFAGQMTGVEGYVESAASGLVAGINLAHKILGKGEVVFPRETMIGSMAYYISHAKNNKNFQPMNANFGLLPSLETRIKDKKERYEAQANRALDYLKNFKKTL.

9–14 (GAGLAG) contributes to the FAD binding site.

The protein belongs to the MnmG family. TrmFO subfamily. FAD serves as cofactor.

Its subcellular location is the cytoplasm. It carries out the reaction uridine(54) in tRNA + (6R)-5,10-methylene-5,6,7,8-tetrahydrofolate + NADH + H(+) = 5-methyluridine(54) in tRNA + (6S)-5,6,7,8-tetrahydrofolate + NAD(+). The catalysed reaction is uridine(54) in tRNA + (6R)-5,10-methylene-5,6,7,8-tetrahydrofolate + NADPH + H(+) = 5-methyluridine(54) in tRNA + (6S)-5,6,7,8-tetrahydrofolate + NADP(+). Its function is as follows. Catalyzes the folate-dependent formation of 5-methyl-uridine at position 54 (M-5-U54) in all tRNAs. This chain is Methylenetetrahydrofolate--tRNA-(uracil-5-)-methyltransferase TrmFO, found in Staphylococcus aureus (strain JH1).